An 81-amino-acid chain; its full sequence is ATP synthase subunit c (81 aa).

Helical transmembrane passes span 14–34 (YLGA…IGTV) and 60–80 (LAFA…LLFV).

This sequence belongs to the ATPase C chain family. As to quaternary structure, F-type ATPases have 2 components, F(1) - the catalytic core - and F(0) - the membrane proton channel. F(1) has five subunits: alpha(3), beta(3), gamma(1), delta(1), epsilon(1). F(0) has three main subunits: a(1), b(2) and c(10-14). The alpha and beta chains form an alternating ring which encloses part of the gamma chain. F(1) is attached to F(0) by a central stalk formed by the gamma and epsilon chains, while a peripheral stalk is formed by the delta and b chains.

The protein resides in the cell membrane. In terms of biological role, f(1)F(0) ATP synthase produces ATP from ADP in the presence of a proton or sodium gradient. F-type ATPases consist of two structural domains, F(1) containing the extramembraneous catalytic core and F(0) containing the membrane proton channel, linked together by a central stalk and a peripheral stalk. During catalysis, ATP synthesis in the catalytic domain of F(1) is coupled via a rotary mechanism of the central stalk subunits to proton translocation. Functionally, key component of the F(0) channel; it plays a direct role in translocation across the membrane. A homomeric c-ring of between 10-14 subunits forms the central stalk rotor element with the F(1) delta and epsilon subunits. This chain is ATP synthase subunit c, found in Clostridium acetobutylicum (strain ATCC 824 / DSM 792 / JCM 1419 / IAM 19013 / LMG 5710 / NBRC 13948 / NRRL B-527 / VKM B-1787 / 2291 / W).